We begin with the raw amino-acid sequence, 810 residues long: S-adenosyl-L-methionine-dependent tRNA 4-demethylwyosine synthase (810 aa).

Disordered stretches follow at residues 86–116 and 156–176; these read NGGG…KGGC and RSST…VGKK. Over residues 104 to 116 the composition is skewed to low complexity; it reads GCCSSKGGKKGGC. The span at 159-172 shows a compositional bias: polar residues; that stretch reads TPKVFSKNSSSNSR. Residues 205–360 enclose the Flavodoxin-like domain; that stretch reads IYVLYSSLQG…KIDEWTSLLA (156 aa). Residues 211-215 and 304-337 contribute to the FMN site; these read SLQGA and VLGL…RRIF. Over residues 374 to 397 the composition is skewed to acidic residues; sequence DENADSEEDEEEGNGSDELGDVED. A disordered region spans residues 374-407; it reads DENADSEEDEEEGNGSDELGDVEDIGGKGSNGKF. The region spanning 463–713 is the Radical SAM core domain; the sequence is FNIASSRCME…ELQRRGLHYD (251 aa). [4Fe-4S] cluster is bound by residues cysteine 479, cysteine 483, and cysteine 486. Lysine 496 is covalently cross-linked (Glycyl lysine isopeptide (Lys-Gly) (interchain with G-Cter in ubiquitin)). The interval 782–810 is disordered; sequence RVYRKDKKKQNKENQETTTRETPLPPIPA.

It belongs to the TYW1 family. [4Fe-4S] cluster is required as a cofactor.

The protein localises to the endoplasmic reticulum. The catalysed reaction is N(1)-methylguanosine(37) in tRNA(Phe) + pyruvate + S-adenosyl-L-methionine = 4-demethylwyosine(37) in tRNA(Phe) + 5'-deoxyadenosine + L-methionine + CO2 + H2O. It participates in tRNA modification; wybutosine-tRNA(Phe) biosynthesis. Functionally, component of the wybutosine biosynthesis pathway. Wybutosine is a hyper modified guanosine with a tricyclic base found at the 3'-position adjacent to the anticodon of eukaryotic phenylalanine tRNA. Catalyzes the condensation of N-methylguanine with 2 carbon atoms from pyruvate to form the tricyclic 4-demethylwyosine, an intermediate in wybutosine biosynthesis. This chain is S-adenosyl-L-methionine-dependent tRNA 4-demethylwyosine synthase (TYW1), found in Saccharomyces cerevisiae (strain ATCC 204508 / S288c) (Baker's yeast).